A 461-amino-acid chain; its full sequence is Phosphomethylpyrimidine synthase (461 aa).

Residues asparagine 80, methionine 109, tyrosine 139, histidine 174, 194–196 (SRG), 235–238 (DSLR), and glutamate 274 contribute to the substrate site. Histidine 278 provides a ligand contact to Zn(2+). Tyrosine 301 is a substrate binding site. Histidine 342 is a Zn(2+) binding site. 3 residues coordinate [4Fe-4S] cluster: cysteine 422, cysteine 425, and cysteine 430.

The protein belongs to the ThiC family. In terms of assembly, homodimer. Requires [4Fe-4S] cluster as cofactor.

The catalysed reaction is 5-amino-1-(5-phospho-beta-D-ribosyl)imidazole + S-adenosyl-L-methionine = 4-amino-2-methyl-5-(phosphooxymethyl)pyrimidine + CO + 5'-deoxyadenosine + formate + L-methionine + 3 H(+). It participates in cofactor biosynthesis; thiamine diphosphate biosynthesis. Functionally, catalyzes the synthesis of the hydroxymethylpyrimidine phosphate (HMP-P) moiety of thiamine from aminoimidazole ribotide (AIR) in a radical S-adenosyl-L-methionine (SAM)-dependent reaction. This chain is Phosphomethylpyrimidine synthase, found in Nautilia profundicola (strain ATCC BAA-1463 / DSM 18972 / AmH).